We begin with the raw amino-acid sequence, 259 residues long: Ribosomal RNA large subunit methyltransferase E (259 aa).

S-adenosyl-L-methionine contacts are provided by glycine 58, tryptophan 60, aspartate 78, aspartate 96, and aspartate 120. Lysine 160 functions as the Proton acceptor in the catalytic mechanism.

It belongs to the class I-like SAM-binding methyltransferase superfamily. RNA methyltransferase RlmE family.

The protein localises to the cytoplasm. It carries out the reaction uridine(2552) in 23S rRNA + S-adenosyl-L-methionine = 2'-O-methyluridine(2552) in 23S rRNA + S-adenosyl-L-homocysteine + H(+). Its function is as follows. Specifically methylates the uridine in position 2552 of 23S rRNA at the 2'-O position of the ribose in the fully assembled 50S ribosomal subunit. This chain is Ribosomal RNA large subunit methyltransferase E, found in Methanococcus vannielii (strain ATCC 35089 / DSM 1224 / JCM 13029 / OCM 148 / SB).